We begin with the raw amino-acid sequence, 465 residues long: Transcriptional protein swt1 (465 aa).

One can recognise a PINc domain in the interval 70–190 (GLFVLDTNFL…LLSDDKNLSI (121 aa)).

It belongs to the SWT1 family.

It is found in the cytoplasm. The protein resides in the nucleus. Functionally, involved in transcription. In Schizosaccharomyces pombe (strain 972 / ATCC 24843) (Fission yeast), this protein is Transcriptional protein swt1.